The sequence spans 301 residues: Thioredoxin-related transmembrane protein 2-A (301 aa).

Positions Met-1–Lys-19 are cleaved as a signal peptide. At Trp-20–Arg-111 the chain is on the extracellular side. A helical transmembrane segment spans residues Phe-112–Tyr-132. Positions Val-122–Lys-269 constitute a Thioredoxin domain. At Met-133–Lys-301 the chain is on the cytoplasmic side. The segment at Ser-268–Lys-301 is disordered. Residues Leu-280–Ser-295 show a composition bias toward acidic residues. Positions Lys-298–Lys-301 match the Di-lysine motif motif.

Monomer. Homodimer; disulfide-linked. Occurs in both reduced and oxidized monomeric form. Oxidative conditions increase homodimerization.

It is found in the endoplasmic reticulum membrane. Its subcellular location is the mitochondrion membrane. Endoplasmic reticulum and mitochondria-associated protein that probably functions as a regulator of cellular redox state and thereby regulates protein post-translational modification, protein folding and mitochondrial activity. This chain is Thioredoxin-related transmembrane protein 2-A, found in Danio rerio (Zebrafish).